A 76-amino-acid polypeptide reads, in one-letter code: Rhesus theta defensin-1/3 subunit A (76 aa).

Residues 1–22 form the signal peptide; that stretch reads MRTFALLTAMLLLVALHAQAEA. The propeptide occupies 23 to 64; the sequence is RQARADEAAAQQQPGTDDQGMAHSFTWPENAALPLSESAKGL. The interval 25 to 45 is disordered; that stretch reads ARADEAAAQQQPGTDDQGMAH. Arg65 participates in a covalent cross-link: Cyclopeptide (Arg-Cys) (interchain with C-73 in subunit A); in form RTD-3. Arg65 is covalently cross-linked (Cyclopeptide (Arg-Cys) (interchain with C-73 in subunit B); in form RTD-1). Residues Cys68 and Cys73 are joined by a disulfide bond. Cys73 participates in a covalent cross-link: Cyclopeptide (Cys-Arg) (interchain with R-65 in subunit A); in form RTD-3. Cys73 participates in a covalent cross-link: Cyclopeptide (Cys-Arg) (interchain with R-65 in subunit B); in form RTD-1. Positions 74 to 76 are excised as a propeptide; the sequence is RLL.

This sequence belongs to the alpha-defensin family. Theta subfamily. RTD-1 is a cyclic heterodimer composed of subunits A and B; disulfide-linked. RTD-3 is a cyclic homodimer composed of two subunits A; disulfide-linked. In terms of processing, forms a cyclic peptide with subunit A (RTD-3) or with subunit B (RTD-1). An additional intersubunit disulfide bond is formed. As to expression, RTD-1 is expressed in bone marrow. Detected in promyelocytes, myelocytes and mature neutrophils and monocytes.

RTD-1 and RTD-3 have similar antimicrobial activities against the Gram-positive bacteria S.aureus 502A and L.monocytogenes, the Gram-negative bacteria S.typhimurium and E.coli ML35, and the fungi C.albicans 16820 and C.neoformans 271A. This chain is Rhesus theta defensin-1/3 subunit A (RTD1A), found in Macaca mulatta (Rhesus macaque).